An 84-amino-acid chain; its full sequence is Putative movement protein (84 aa).

Residues 15-35 (ALHGILVAFIAVLCLIGCLWA) form a helical membrane-spanning segment.

In terms of assembly, interacts with the capsid protein (CP). Part of a MP-CP-viral DNA complex.

The protein resides in the host membrane. Involved in the viral transport within, and between cells. The polypeptide is Putative movement protein (Miscanthus streak virus (isolate 91) (MiSV)).